A 298-amino-acid polypeptide reads, in one-letter code: Ribosomal RNA small subunit methyltransferase A (298 aa).

S-adenosyl-L-methionine contacts are provided by asparagine 30, valine 32, glycine 57, glutamate 78, aspartate 108, and asparagine 126.

This sequence belongs to the class I-like SAM-binding methyltransferase superfamily. rRNA adenine N(6)-methyltransferase family. RsmA subfamily.

It is found in the cytoplasm. The enzyme catalyses adenosine(1518)/adenosine(1519) in 16S rRNA + 4 S-adenosyl-L-methionine = N(6)-dimethyladenosine(1518)/N(6)-dimethyladenosine(1519) in 16S rRNA + 4 S-adenosyl-L-homocysteine + 4 H(+). Functionally, specifically dimethylates two adjacent adenosines (A1518 and A1519) in the loop of a conserved hairpin near the 3'-end of 16S rRNA in the 30S particle. May play a critical role in biogenesis of 30S subunits. The polypeptide is Ribosomal RNA small subunit methyltransferase A (Cutibacterium acnes (strain DSM 16379 / KPA171202) (Propionibacterium acnes)).